Reading from the N-terminus, the 317-residue chain is tRNA dimethylallyltransferase (317 aa).

13–20 (GPTASGKS) provides a ligand contact to ATP. Substrate is bound at residue 15 to 20 (TASGKS).

This sequence belongs to the IPP transferase family. Monomer. It depends on Mg(2+) as a cofactor.

It catalyses the reaction adenosine(37) in tRNA + dimethylallyl diphosphate = N(6)-dimethylallyladenosine(37) in tRNA + diphosphate. Functionally, catalyzes the transfer of a dimethylallyl group onto the adenine at position 37 in tRNAs that read codons beginning with uridine, leading to the formation of N6-(dimethylallyl)adenosine (i(6)A). The sequence is that of tRNA dimethylallyltransferase from Kineococcus radiotolerans (strain ATCC BAA-149 / DSM 14245 / SRS30216).